Consider the following 76-residue polypeptide: Sec-independent protein translocase protein TatA (76 aa).

The chain crosses the membrane as a helical span at residues 1 to 21 (MGGLSIWHWLIVLLIVALVFG). A disordered region spans residues 40–76 (KDGMKEGETPADAQQLPRTGTVDVNAKETTRSDSNKA). The segment covering 64-76 (NAKETTRSDSNKA) has biased composition (basic and acidic residues).

It belongs to the TatA/E family. As to quaternary structure, the Tat system comprises two distinct complexes: a TatABC complex, containing multiple copies of TatA, TatB and TatC subunits, and a separate TatA complex, containing only TatA subunits. Substrates initially bind to the TatABC complex, which probably triggers association of the separate TatA complex to form the active translocon.

The protein localises to the cell inner membrane. Functionally, part of the twin-arginine translocation (Tat) system that transports large folded proteins containing a characteristic twin-arginine motif in their signal peptide across membranes. TatA could form the protein-conducting channel of the Tat system. This is Sec-independent protein translocase protein TatA from Burkholderia ambifaria (strain MC40-6).